The primary structure comprises 195 residues: Large ribosomal subunit protein uL18 (195 aa).

It belongs to the universal ribosomal protein uL18 family. In terms of assembly, part of the 50S ribosomal subunit. Contacts the 5S and 23S rRNAs.

In terms of biological role, this is one of the proteins that bind and probably mediate the attachment of the 5S RNA into the large ribosomal subunit, where it forms part of the central protuberance. This Korarchaeum cryptofilum (strain OPF8) protein is Large ribosomal subunit protein uL18.